We begin with the raw amino-acid sequence, 510 residues long: Probable gamma-aminobutyrate transaminase 3, mitochondrial (510 aa).

The transit peptide at 1–41 (MICRSLLLLRSNAASKASNIVKHVAATGCLPKYSSEAPARY) directs the protein to the mitochondrion. 166–167 (GS) provides a ligand contact to pyridoxal 5'-phosphate. Y199 is a binding site for substrate. Residue D306 coordinates pyridoxal 5'-phosphate. Residue K335 coordinates substrate. Residue K335 is modified to N6-(pyridoxal phosphate)lysine.

It belongs to the class-III pyridoxal-phosphate-dependent aminotransferase family.

Its subcellular location is the mitochondrion. It catalyses the reaction 4-aminobutanoate + pyruvate = succinate semialdehyde + L-alanine. It carries out the reaction 4-aminobutanoate + glyoxylate = succinate semialdehyde + glycine. Transaminase that degrades gamma-amino butyric acid (GABA). This chain is Probable gamma-aminobutyrate transaminase 3, mitochondrial, found in Oryza sativa subsp. japonica (Rice).